The chain runs to 434 residues: MDKIWHMGPRGDYTRKKRAGERLNLTPKPDLALPGRTEALPGLKGKGKEQGLRKITEKKELSRLTGSSSQRPSLLSVTGGEHLQENSPGQETPEEKTPPCETVTDTFEMDSLLSSTELVSGPAEQDDFSSCLPSCSNAELHTESTDERGSSFPSPELFRGSDCLDWEHPKLEDYMFYKNSTLLDTSKAVVIEKAPQFANLSAVLSSSSKNYEKRHRKIGMTLAAQHLSPEPKYASNLASVVDNAASEVVFAEKTGPPTTEKTQKKPENESEDSGPLVQTKLSSGHPDNKALCSPLSSALESTAVRYTLLPQPLEPVLKKGCILPDKQSKALLTSTPSSDIAEFVIDLSPVQNVSFEELFPNVSNYVNSSEVVPVSSLQESSSNEFSPNTSEICCIIRSSPGTRQMRRKDPAVKNRCSPPKDVPLDIIMKTNGRT.

2 disordered regions span residues 1 to 102 (MDKI…PCET) and 249 to 289 (VFAE…PDNK). Over residues 46-62 (KGKEQGLRKITEKKELS) the composition is skewed to basic and acidic residues. Polar residues predominate over residues 64–76 (LTGSSSQRPSLLS). Positions 334–336 (STP) match the POLO box domain (PBD)-binding motif. Residues 391-394 (EICC) are required for localization to kinetochores. Residues 404–424 (QMRRKDPAVKNRCSPPKDVPL) form a disordered region.

Interacts with CENPC. Interacts with PLK1; required for recruitment of PLK1 at kinetochores. As to expression, germ cell-specific. Expressed in both testis and ovary. Not expressed in other tissues.

It localises to the chromosome. Its subcellular location is the centromere. The protein localises to the kinetochore. Its function is as follows. Key regulator of kinetochore function during meiosis I: required both for mono-orientation of kinetochores on sister chromosomes and protection of centromeric cohesin from separase-mediated cleavage. Acts by facilitating kinetochore mono-orientation during meiosis I, when kinetochores on sister chromosomes face the same direction and are thus captured and pulled by spindle fibers from the same pole. Also required to prevent cleavage of cohesin at centromeres during meiosis I, possibly by acting as a regulator of the shugoshin-dependent protection pathway. Acts in collaboration with PLK1: required for PLK1 enrichment to kinetochores. Not required during meiosis II or mitosis. The chain is Meiosis-specific kinetochore protein from Mus musculus (Mouse).